The following is a 288-amino-acid chain: Signal recognition particle receptor FtsY (288 aa).

GTP-binding positions include 93–100 (GINGTGKT), 175–179 (DTAGR), and 233–236 (TKLD).

This sequence belongs to the GTP-binding SRP family. FtsY subfamily. Part of the signal recognition particle protein translocation system, which is composed of SRP and FtsY.

Its subcellular location is the cell membrane. It localises to the cytoplasm. The enzyme catalyses GTP + H2O = GDP + phosphate + H(+). Functionally, involved in targeting and insertion of nascent membrane proteins into the cytoplasmic membrane. Acts as a receptor for the complex formed by the signal recognition particle (SRP) and the ribosome-nascent chain (RNC). The protein is Signal recognition particle receptor FtsY of Thermoplasma acidophilum (strain ATCC 25905 / DSM 1728 / JCM 9062 / NBRC 15155 / AMRC-C165).